Consider the following 565-residue polypeptide: Protein NRT1/ PTR FAMILY 5.15 (565 aa).

Transmembrane regions (helical) follow at residues 49-67 (FAYFGIACNLITYLTGPLG) and 80-100 (WSGTASILPILGAFVADAYLG). Position 104 is a phosphothreonine (Thr104). The next 10 membrane-spanning stretches (helical) occupy residues 110–130 (LIYILGLGLLTLSASLIIMGL), 142–162 (SIWVNTLFFCSLYLVAIGQGG), 189–209 (FFNWWFLSLSAGISISIIVVA), 217–237 (WAFGFGIPCLFMVMALAIFLL), 331–351 (IPIWITYVVSTIPYAQYITFF), 368–388 (IPAASLLSFVGVSILISVPLY), 409–429 (LQRIGAGMVLSVFNMMLAALV), 454–474 (IWWFVPQYLLLGMIDLFSMVG), 490–510 (IGLSLSLSAMGLSSFLSGFLI), and 534–554 (YFYWLLAAFTAIAFFAFLFIS).

It belongs to the major facilitator superfamily. Proton-dependent oligopeptide transporter (POT/PTR) (TC 2.A.17) family. In terms of tissue distribution, expressed in shoots, roots and leaves.

It is found in the membrane. The sequence is that of Protein NRT1/ PTR FAMILY 5.15 (NPF5.15) from Arabidopsis thaliana (Mouse-ear cress).